We begin with the raw amino-acid sequence, 290 residues long: Polyamine aminopropyltransferase (290 aa).

The PABS domain maps to 5-238 (QLWYEKLHSS…GIMTFAWASE (234 aa)). An S-methyl-5'-thioadenosine-binding site is contributed by Gln33. His64 and Asp88 together coordinate spermidine. Residues Glu108 and 140 to 141 (DG) each bind S-methyl-5'-thioadenosine. The Proton acceptor role is filled by Asp158. 158–161 (DSTD) is a spermidine binding site. Pro165 serves as a coordination point for S-methyl-5'-thioadenosine.

This sequence belongs to the spermidine/spermine synthase family. As to quaternary structure, homodimer or homotetramer.

Its subcellular location is the cytoplasm. The catalysed reaction is S-adenosyl 3-(methylsulfanyl)propylamine + putrescine = S-methyl-5'-thioadenosine + spermidine + H(+). Its pathway is amine and polyamine biosynthesis; spermidine biosynthesis; spermidine from putrescine: step 1/1. Functionally, catalyzes the irreversible transfer of a propylamine group from the amino donor S-adenosylmethioninamine (decarboxy-AdoMet) to putrescine (1,4-diaminobutane) to yield spermidine. This Hamiltonella defensa subsp. Acyrthosiphon pisum (strain 5AT) protein is Polyamine aminopropyltransferase.